The chain runs to 560 residues: MIPTMTSAGWAPGVVQFREYQRRWLRGDVLAGLTVAAYLIPQAMAYATVAGLPPAAGLWASIAPLAIYALLGSSRQLSIGPESATALMTAAVLAPMAAGDLRRYAVLAATLGLLVGLICLLAGTARLGFLASLLSRPVLVGYMAGIALVMISSQLGTITGTSVEGNEFFSEVHSFATSVTRVHWPTFVLAMSVLALLTMLTRWAPRAPGPIIAVLAATMLVAVMSLDAKGIAIVGRIPSGLPTPGVPPVSVEDLRALIIPAAGIAIVTFTDGVLTARAFAARRGQEVNANAELRAVGACNIAAGLTHGFPVSSSSSRTALADVVGGRTQLYSLIALGLVVIVMVFASGLLAMFPIAALGALVVYAALRLIDLSEFRRLARFRRSELMLALATTAAVLGLGVFYGVLAAVALSILELLRRVAHPHDSVLGFVPGIAGMHDIDDYPQAKRVPGLVVYRYDAPLCFANAEDFRRRALTVVDQDPGQVEWFVLNAESNVEVDLTALDALDQLRTELLRRGIVFAMARVKQDLRESLRAASLLDKIGEDHIFMTLPTAVQAFRRR.

11 helical membrane-spanning segments follow: residues 29 to 49, 51 to 71, 79 to 99, 105 to 125, 138 to 158, 184 to 204, 207 to 227, 256 to 276, 333 to 353, 355 to 375, and 394 to 414; these read VLAG…YATV, GLPP…YALL, IGPE…MAAG, AVLA…AGTA, VLVG…LGTI, WPTF…TRWA, APGP…MSLD, ALII…VLTA, LIAL…LAMF, IAAL…LSEF, and AAVL…LSIL. The region spanning 442–557 is the STAS domain; the sequence is DYPQAKRVPG…MTLPTAVQAF (116 aa).

The protein belongs to the SLC26A/SulP transporter (TC 2.A.53) family.

The protein localises to the cell membrane. This Mycobacterium tuberculosis (strain CDC 1551 / Oshkosh) protein is Probable sulfate transporter MT1781.